A 441-amino-acid chain; its full sequence is Alpha-monoglucosyldiacylglycerol synthase (441 aa).

Belongs to the glycosyltransferase group 1 family. Glycosyltransferase 4 subfamily. It depends on Mg(2+) as a cofactor.

It localises to the cell membrane. The enzyme catalyses a 1,2-diacyl-sn-glycerol + UDP-alpha-D-glucose = a 1,2-diacyl-3-O-(alpha-D-glucopyranosyl)-sn-glycerol + UDP + H(+). Activated by the negatively charged lipid phosphatidylglycerol (PG). Its function is as follows. Glucosyltransferase involved in the biosynthesis of the non-bilayer-prone membrane lipid alpha-monoglucosyldiacylglycerol. This is a major component for maintaining a certain anionic lipid surface charge density, for balancing the bilayer to non-bilayer phase equilibria and for keeping a constant lipid bilayer spontaneous curvature (curvature packing stress). Catalyzes the transfer of a glucosyl residue from UDP-Glc to diacylglycerol (DAG) acceptor to form the corresponding alpha-glucosyl-DAG (1,2-diacyl-3-O-(alpha-D-glucopyranosyl)-sn-glycerol). It can only use UDP-Glc as sugar donor. This is Alpha-monoglucosyldiacylglycerol synthase from Streptococcus pneumoniae (strain ATCC BAA-255 / R6).